A 496-amino-acid chain; its full sequence is Glutamyl-tRNA(Gln) amidotransferase subunit A (496 aa).

Catalysis depends on charge relay system residues Lys-75 and Ser-150. Catalysis depends on Ser-174, which acts as the Acyl-ester intermediate.

It belongs to the amidase family. GatA subfamily. As to quaternary structure, heterotrimer of A, B and C subunits.

The enzyme catalyses L-glutamyl-tRNA(Gln) + L-glutamine + ATP + H2O = L-glutaminyl-tRNA(Gln) + L-glutamate + ADP + phosphate + H(+). In terms of biological role, allows the formation of correctly charged Gln-tRNA(Gln) through the transamidation of misacylated Glu-tRNA(Gln) in organisms which lack glutaminyl-tRNA synthetase. The reaction takes place in the presence of glutamine and ATP through an activated gamma-phospho-Glu-tRNA(Gln). This Burkholderia ambifaria (strain ATCC BAA-244 / DSM 16087 / CCUG 44356 / LMG 19182 / AMMD) (Burkholderia cepacia (strain AMMD)) protein is Glutamyl-tRNA(Gln) amidotransferase subunit A.